A 251-amino-acid polypeptide reads, in one-letter code: NADPH-dependent oxidoreductase (251 aa).

The protein belongs to the flavin oxidoreductase frp family. It depends on FMN as a cofactor.

Its function is as follows. Reduces FMN, organic nitro compounds and disulfide DTNB. Involved in maintenance of the cellular redox state and the disulfide stress response. This Staphylococcus aureus (strain USA300) protein is NADPH-dependent oxidoreductase (nfrA).